The sequence spans 374 residues: Cytochrome b (374 aa).

Transmembrane regions (helical) follow at residues 25–45 (FGSM…FLAI), 69–90 (WIIQ…YMHI), 105–125 (WLSG…GYVL), and 170–190 (FFAL…IHII). His75 and His89 together coordinate heme b. His174 and His188 together coordinate heme b. Residue His193 participates in a ubiquinone binding. The next 4 helical transmembrane spans lie at 218-238 (YKDM…LSFT), 280-300 (LGGA…PFTH), 312-332 (LAQI…WTAT), and 339-358 (FITI…MINP).

It belongs to the cytochrome b family. As to quaternary structure, the cytochrome bc1 complex contains 3 respiratory subunits (MT-CYB, CYC1 and UQCRFS1), 2 core proteins (UQCRC1 and UQCRC2) and probably 6 low-molecular weight proteins. Requires heme b as cofactor.

The protein localises to the mitochondrion inner membrane. Functionally, component of the ubiquinol-cytochrome c reductase complex (complex III or cytochrome b-c1 complex) that is part of the mitochondrial respiratory chain. The b-c1 complex mediates electron transfer from ubiquinol to cytochrome c. Contributes to the generation of a proton gradient across the mitochondrial membrane that is then used for ATP synthesis. The polypeptide is Cytochrome b (MT-CYB) (Calliophis bivirgatus (Blue Malaysian coral snake)).